We begin with the raw amino-acid sequence, 175 residues long: Ribosome maturation factor RimM (175 aa).

The 74-residue stretch at 100–173 folds into the PRC barrel domain; sequence EGEYYFHEII…TIIIRPMEGL (74 aa).

This sequence belongs to the RimM family. In terms of assembly, binds ribosomal protein uS19.

It localises to the cytoplasm. An accessory protein needed during the final step in the assembly of 30S ribosomal subunit, possibly for assembly of the head region. Essential for efficient processing of 16S rRNA. May be needed both before and after RbfA during the maturation of 16S rRNA. It has affinity for free ribosomal 30S subunits but not for 70S ribosomes. The chain is Ribosome maturation factor RimM from Geobacillus kaustophilus (strain HTA426).